The chain runs to 144 residues: MSGDEAAPVVVPPPVAEPAAIPEDMDLMTALELTLRKARAYGGVVRGLHECAKLIEKRVAQLVVLAEDCNQPDYVKLVKALCADHEVRLLTVPSAKTLGEWAGLCKIDSEGNARKVVGCSCLVVKDFGEETTALSIVNKHIASQ.

Ser2 is subject to N-acetylserine.

This sequence belongs to the eukaryotic ribosomal protein eS12 family.

This Arabidopsis thaliana (Mouse-ear cress) protein is Small ribosomal subunit protein eS12z (RPS12A).